A 340-amino-acid chain; its full sequence is Phosphoribosylformylglycinamidine cyclo-ligase (340 aa).

Belongs to the AIR synthase family.

It is found in the cytoplasm. The enzyme catalyses 2-formamido-N(1)-(5-O-phospho-beta-D-ribosyl)acetamidine + ATP = 5-amino-1-(5-phospho-beta-D-ribosyl)imidazole + ADP + phosphate + H(+). It participates in purine metabolism; IMP biosynthesis via de novo pathway; 5-amino-1-(5-phospho-D-ribosyl)imidazole from N(2)-formyl-N(1)-(5-phospho-D-ribosyl)glycinamide: step 2/2. The polypeptide is Phosphoribosylformylglycinamidine cyclo-ligase (Macrococcus caseolyticus (strain JCSC5402) (Macrococcoides caseolyticum)).